Reading from the N-terminus, the 365-residue chain is Histidinol-phosphate aminotransferase (365 aa).

Residue lysine 221 is modified to N6-(pyridoxal phosphate)lysine.

It belongs to the class-II pyridoxal-phosphate-dependent aminotransferase family. Histidinol-phosphate aminotransferase subfamily. As to quaternary structure, homodimer. Pyridoxal 5'-phosphate is required as a cofactor.

The enzyme catalyses L-histidinol phosphate + 2-oxoglutarate = 3-(imidazol-4-yl)-2-oxopropyl phosphate + L-glutamate. The protein operates within amino-acid biosynthesis; L-histidine biosynthesis; L-histidine from 5-phospho-alpha-D-ribose 1-diphosphate: step 7/9. In Rhodopseudomonas palustris (strain HaA2), this protein is Histidinol-phosphate aminotransferase.